Reading from the N-terminus, the 143-residue chain is Snake venom vascular endothelial growth factor toxin (143 aa).

Residues 1 to 24 (MAVYLLAVAILFCIQGWPSGTVQG) form the signal peptide. Glu25 carries the post-translational modification Pyrrolidone carboxylic acid (Glu). Disulfide bonds link Cys38–Cys80, Cys69–Cys115, and Cys73–Cys117. A disordered region spans residues 117-143 (CRPRSPGDVNDGRNPKEGEPRARFPFV).

This sequence belongs to the PDGF/VEGF growth factor family. Snake venom VEGF subfamily. Homodimer; disulfide-linked. Interacts with VEGF receptor-1 (FLT1) with a high affinity, whereas it binds to VEGF receptor-2 (KDR) with a low affinity. Does not bind to VEGFR-3/FLT4 and neuropilin-1 (NRP1). As to expression, expressed by the venom gland.

The protein localises to the secreted. Snake venom VEGFs may contribute to venom dispersion and prey subjugation by inducing vascular permeability and hypotension. This protein activates the vascular endothelial growth factor receptor-1 (VEGFR-1/FLT1), and consequently promotes the proliferation and tissue factor production of endothelial cells, the neovascularization in the chicken chorioallantoic membrane, and increases vascular permeability. Also stimulates tissue-factor production and human monocyte chemotaxis. This is Snake venom vascular endothelial growth factor toxin from Protobothrops mucrosquamatus (Taiwan habu).